A 362-amino-acid polypeptide reads, in one-letter code: UDP-N-acetylglucosamine--N-acetylmuramyl-(pentapeptide) pyrophosphoryl-undecaprenol N-acetylglucosamine transferase (362 aa).

Residues 14–16 (TGG), Asn126, Arg166, Ser193, and Gln294 each bind UDP-N-acetyl-alpha-D-glucosamine.

The protein belongs to the glycosyltransferase 28 family. MurG subfamily.

The protein localises to the cell inner membrane. It catalyses the reaction di-trans,octa-cis-undecaprenyl diphospho-N-acetyl-alpha-D-muramoyl-L-alanyl-D-glutamyl-meso-2,6-diaminopimeloyl-D-alanyl-D-alanine + UDP-N-acetyl-alpha-D-glucosamine = di-trans,octa-cis-undecaprenyl diphospho-[N-acetyl-alpha-D-glucosaminyl-(1-&gt;4)]-N-acetyl-alpha-D-muramoyl-L-alanyl-D-glutamyl-meso-2,6-diaminopimeloyl-D-alanyl-D-alanine + UDP + H(+). The protein operates within cell wall biogenesis; peptidoglycan biosynthesis. Functionally, cell wall formation. Catalyzes the transfer of a GlcNAc subunit on undecaprenyl-pyrophosphoryl-MurNAc-pentapeptide (lipid intermediate I) to form undecaprenyl-pyrophosphoryl-MurNAc-(pentapeptide)GlcNAc (lipid intermediate II). The sequence is that of UDP-N-acetylglucosamine--N-acetylmuramyl-(pentapeptide) pyrophosphoryl-undecaprenol N-acetylglucosamine transferase from Paracoccus denitrificans (strain Pd 1222).